The primary structure comprises 69 residues: UPF0337 protein DIP1660 (69 aa).

Basic and acidic residues-rich tracts occupy residues 1 to 19 (MSDF…KEAV) and 30 to 41 (DEGRADQTKADV). The disordered stretch occupies residues 1-42 (MSDFENKIEELGGKAKEAVGEATENEQLADEGRADQTKADVK).

It belongs to the UPF0337 (CsbD) family.

This is UPF0337 protein DIP1660 from Corynebacterium diphtheriae (strain ATCC 700971 / NCTC 13129 / Biotype gravis).